The primary structure comprises 369 residues: sn-glycerol-3-phosphate import ATP-binding protein UgpC (369 aa).

The region spanning 4–235 (LSLRNVQKTY…PASTFVAGFI (232 aa)) is the ABC transporter domain. 37–44 (GPSGCGKS) contributes to the ATP binding site.

This sequence belongs to the ABC transporter superfamily. sn-glycerol-3-phosphate importer (TC 3.A.1.1.3) family. The complex is composed of two ATP-binding proteins (UgpC), two transmembrane proteins (UgpA and UgpE) and a solute-binding protein (UgpB).

Its subcellular location is the cell inner membrane. The catalysed reaction is sn-glycerol 3-phosphate(out) + ATP + H2O = sn-glycerol 3-phosphate(in) + ADP + phosphate + H(+). In terms of biological role, part of the ABC transporter complex UgpBAEC involved in sn-glycerol-3-phosphate (G3P) import. Responsible for energy coupling to the transport system. This chain is sn-glycerol-3-phosphate import ATP-binding protein UgpC, found in Cupriavidus pinatubonensis (strain JMP 134 / LMG 1197) (Cupriavidus necator (strain JMP 134)).